The sequence spans 360 residues: Photosystem II protein D1 (360 aa).

Transmembrane regions (helical) follow at residues 29–46, 118–133, and 142–156; these read YIGW…TATT, HFLL…QWEL, and WICV…AATA. His118 contributes to the chlorophyll a binding site. Tyr126 serves as a coordination point for pheophytin a. Residues Asp170 and Glu189 each coordinate [CaMn4O5] cluster. Residues 197–218 form a helical membrane-spanning segment; that stretch reads FHMLGVAGVFGGSLFSAMHGSL. Residue His198 participates in chlorophyll a binding. A quinone is bound by residues His215 and 264-265; that span reads SF. Residue His215 coordinates Fe cation. Residue His272 participates in Fe cation binding. A helical membrane pass occupies residues 274–288; it reads FLGAWPVIGIWFTAM. 4 residues coordinate [CaMn4O5] cluster: His332, Glu333, Asp342, and Ala344. The propeptide occupies 345–360; the sequence is SGEQAPVALIAPAING.

Belongs to the reaction center PufL/M/PsbA/D family. In terms of assembly, PSII is composed of 1 copy each of membrane proteins PsbA, PsbB, PsbC, PsbD, PsbE, PsbF, PsbH, PsbI, PsbJ, PsbK, PsbL, PsbM, PsbT, PsbX, PsbY, PsbZ, Psb30/Ycf12, peripheral proteins PsbO, CyanoQ (PsbQ), PsbU, PsbV and a large number of cofactors. It forms dimeric complexes. Requires The D1/D2 heterodimer binds P680, chlorophylls that are the primary electron donor of PSII, and subsequent electron acceptors. It shares a non-heme iron and each subunit binds pheophytin, quinone, additional chlorophylls, carotenoids and lipids. D1 provides most of the ligands for the Mn4-Ca-O5 cluster of the oxygen-evolving complex (OEC). There is also a Cl(-1) ion associated with D1 and D2, which is required for oxygen evolution. The PSII complex binds additional chlorophylls, carotenoids and specific lipids. as cofactor. Tyr-161 forms a radical intermediate that is referred to as redox-active TyrZ, YZ or Y-Z. In terms of processing, C-terminally processed by CtpA; processing is essential to allow assembly of the oxygen-evolving complex and thus photosynthetic growth.

The protein localises to the cellular thylakoid membrane. It carries out the reaction 2 a plastoquinone + 4 hnu + 2 H2O = 2 a plastoquinol + O2. Its function is as follows. Photosystem II (PSII) is a light-driven water:plastoquinone oxidoreductase that uses light energy to abstract electrons from H(2)O, generating O(2) and a proton gradient subsequently used for ATP formation. It consists of a core antenna complex that captures photons, and an electron transfer chain that converts photonic excitation into a charge separation. The D1/D2 (PsbA/PsbD) reaction center heterodimer binds P680, the primary electron donor of PSII as well as several subsequent electron acceptors. This Microcystis aeruginosa (strain NIES-843 / IAM M-2473) protein is Photosystem II protein D1.